The chain runs to 419 residues: Gamma-glutamyl phosphate reductase (419 aa).

This sequence belongs to the gamma-glutamyl phosphate reductase family.

The protein resides in the cytoplasm. It catalyses the reaction L-glutamate 5-semialdehyde + phosphate + NADP(+) = L-glutamyl 5-phosphate + NADPH + H(+). It participates in amino-acid biosynthesis; L-proline biosynthesis; L-glutamate 5-semialdehyde from L-glutamate: step 2/2. In terms of biological role, catalyzes the NADPH-dependent reduction of L-glutamate 5-phosphate into L-glutamate 5-semialdehyde and phosphate. The product spontaneously undergoes cyclization to form 1-pyrroline-5-carboxylate. This is Gamma-glutamyl phosphate reductase from Caldicellulosiruptor bescii (strain ATCC BAA-1888 / DSM 6725 / KCTC 15123 / Z-1320) (Anaerocellum thermophilum).